A 156-amino-acid chain; its full sequence is Small ribosomal subunit protein uS7 (156 aa).

This sequence belongs to the universal ribosomal protein uS7 family. Part of the 30S ribosomal subunit. Contacts proteins S9 and S11.

One of the primary rRNA binding proteins, it binds directly to 16S rRNA where it nucleates assembly of the head domain of the 30S subunit. Is located at the subunit interface close to the decoding center, probably blocks exit of the E-site tRNA. In Colwellia psychrerythraea (strain 34H / ATCC BAA-681) (Vibrio psychroerythus), this protein is Small ribosomal subunit protein uS7.